Consider the following 164-residue polypeptide: Endoribonuclease YbeY (164 aa).

The Zn(2+) site is built by H111, H115, and H121. Residues 140-164 are disordered; the sequence is ELGHPDPYADDDAQKHSTVTIKDSE. Residues 155-164 show a composition bias toward polar residues; that stretch reads HSTVTIKDSE.

The protein belongs to the endoribonuclease YbeY family. Requires Zn(2+) as cofactor.

Its subcellular location is the cytoplasm. In terms of biological role, single strand-specific metallo-endoribonuclease involved in late-stage 70S ribosome quality control and in maturation of the 3' terminus of the 16S rRNA. The polypeptide is Endoribonuclease YbeY (Pseudomonas fluorescens (strain SBW25)).